Here is a 394-residue protein sequence, read N- to C-terminus: uncharacterized protein (394 aa).

Residues 7–51 enclose the F-box domain; sequence RKVIPNMPDLILRKIFDQYDYPVLCKMERVCRRWTNIINSKFRKE.

This is an uncharacterized protein from Caenorhabditis elegans.